We begin with the raw amino-acid sequence, 522 residues long: Light-independent protochlorophyllide reductase subunit B (522 aa).

Asp36 serves as a coordination point for [4Fe-4S] cluster. The Proton donor role is filled by Asp290. 425 to 426 (GL) provides a ligand contact to substrate.

The protein belongs to the ChlB/BchB/BchZ family. As to quaternary structure, protochlorophyllide reductase is composed of three subunits; ChlL, ChlN and ChlB. Forms a heterotetramer of two ChlB and two ChlN subunits. It depends on [4Fe-4S] cluster as a cofactor.

The catalysed reaction is chlorophyllide a + oxidized 2[4Fe-4S]-[ferredoxin] + 2 ADP + 2 phosphate = protochlorophyllide a + reduced 2[4Fe-4S]-[ferredoxin] + 2 ATP + 2 H2O. The protein operates within porphyrin-containing compound metabolism; chlorophyll biosynthesis (light-independent). Functionally, component of the dark-operative protochlorophyllide reductase (DPOR) that uses Mg-ATP and reduced ferredoxin to reduce ring D of protochlorophyllide (Pchlide) to form chlorophyllide a (Chlide). This reaction is light-independent. The NB-protein (ChlN-ChlB) is the catalytic component of the complex. The polypeptide is Light-independent protochlorophyllide reductase subunit B (Synechococcus sp. (strain CC9311)).